The chain runs to 172 residues: R-phycocyanin-1 beta chain (172 aa).

Asn-72 is subject to N4-methylasparagine. Residue Cys-82 coordinates (2R,3E)-phycocyanobilin. A (2R,3E)-phycoerythrobilin-binding site is contributed by Cys-153.

Belongs to the phycobiliprotein family. In terms of assembly, heterodimer of an alpha and a beta chain. Dimers further assemble into trimers and the trimers into hexamers. The basic functional unit of phycobiliproteins is a ring-shaped hexamer formed from two back-to-back trimers contacting via the alpha chain subunits. The trimers are composed of alpha/beta subunit heterodimers arranged around a three-fold axis of symmetry. The phycoerythrins also contain a gamma subunit which is located in the center of the hexamer. In terms of processing, contains two covalently linked bilin chromophores.

It localises to the plastid. It is found in the chloroplast thylakoid membrane. Functionally, light-harvesting photosynthetic bile pigment-protein from the phycobiliprotein complex (phycobilisome, PBS). Phycocyanin is the major phycobiliprotein in the PBS rod. The sequence is that of R-phycocyanin-1 beta chain (rpcB) from Porphyridium purpureum (Red alga).